The primary structure comprises 63 residues: Sec-independent protein translocase protein TatA (63 aa).

The helical transmembrane segment at 1 to 21 (MGGLSVGSVVLIALVALLIFG) threads the bilayer.

This sequence belongs to the TatA/E family. In terms of assembly, forms a complex with TatC.

It localises to the cell membrane. In terms of biological role, part of the twin-arginine translocation (Tat) system that transports large folded proteins containing a characteristic twin-arginine motif in their signal peptide across membranes. TatA could form the protein-conducting channel of the Tat system. This chain is Sec-independent protein translocase protein TatA, found in Shouchella clausii (strain KSM-K16) (Alkalihalobacillus clausii).